A 473-amino-acid polypeptide reads, in one-letter code: MYTYMEYLQKCFYKSTNWNEDNIYSNITATSQALLDFPIPNGFKIDSSSKTTDYSASSFTLSNHHQINGSLAYLYSSIPLTNTMGTKDVSLQDAIAGFRIIEPSVGLRSKLKNNIMSNRSSLLYGRMYFPGSALEAMIIKRLTKNSQLLIKCVNNPHLEKNGTMIVYLQNNTAKYSRELIYSTNEALIGLRCLYNLGDATSHNFTNINPAVIPKFDNSVVSIGTEIWYAARTMSPGLSAALRYSTRSTSTGKPLTMTLAINPIVGHVSSTYTVKTSVASTFCSKYDFNVFSYASNLSLGFELYSYANKKKNSFPSFEHHEIHSSSEENKYLKKHPELQRHHNLHHNLHHQRVPIKSHKYEGNRTIINPIQNLDNVYHINPTLLSSNGSTSTTTNNENTNTSETVTAAFQNLVNESDFSSVFKFSTSLNDKVVKILWEGRLKEFLVSTGVKLSLNPITNTPEFNKLGISFSYAL.

Belongs to the MDM10 family. Component of the ER-mitochondria encounter structure (ERMES) or MDM complex, composed of MMM1, MDM10, MDM12 and MDM34. Associates with the mitochondrial outer membrane sorting assembly machinery SAM(core) complex.

It is found in the mitochondrion outer membrane. In terms of biological role, component of the ERMES/MDM complex, which serves as a molecular tether to connect the endoplasmic reticulum and mitochondria. Components of this complex are involved in the control of mitochondrial shape and protein biogenesis and may function in phospholipid exchange. MDM10 is involved in the late assembly steps of the general translocase of the mitochondrial outer membrane (TOM complex). Functions in the TOM40-specific route of the assembly of outer membrane beta-barrel proteins, including the association of TOM40 with the receptor TOM22 and small TOM proteins. Can associate with the SAM(core) complex as well as the MDM12-MMM1 complex, both involved in late steps of the major beta-barrel assembly pathway, that is responsible for biogenesis of all outer membrane beta-barrel proteins. May act as a switch that shuttles between both complexes and channels precursor proteins into the TOM40-specific pathway. Plays a role in mitochondrial morphology and in the inheritance of mitochondria. The protein is Mitochondrial distribution and morphology protein 10 of Candida albicans (strain SC5314 / ATCC MYA-2876) (Yeast).